Reading from the N-terminus, the 389-residue chain is Sulfate adenylyltransferase (389 aa).

It belongs to the sulfate adenylyltransferase family.

It catalyses the reaction sulfate + ATP + H(+) = adenosine 5'-phosphosulfate + diphosphate. The protein operates within sulfur metabolism; hydrogen sulfide biosynthesis; sulfite from sulfate: step 1/3. The chain is Sulfate adenylyltransferase from Hyperthermus butylicus (strain DSM 5456 / JCM 9403 / PLM1-5).